The following is a 403-amino-acid chain: 8-amino-7-oxononanoate synthase (403 aa).

Residue Arg-30 coordinates substrate. Residue 121-122 participates in pyridoxal 5'-phosphate binding; sequence GY. A substrate-binding site is contributed by His-146. Ser-192, His-220, and Thr-248 together coordinate pyridoxal 5'-phosphate. Lys-251 carries the N6-(pyridoxal phosphate)lysine modification. Residue Thr-367 participates in substrate binding.

The protein belongs to the class-II pyridoxal-phosphate-dependent aminotransferase family. BioF subfamily. In terms of assembly, homodimer. Requires pyridoxal 5'-phosphate as cofactor.

The enzyme catalyses 6-carboxyhexanoyl-[ACP] + L-alanine + H(+) = (8S)-8-amino-7-oxononanoate + holo-[ACP] + CO2. The protein operates within cofactor biosynthesis; biotin biosynthesis. Its function is as follows. Catalyzes the decarboxylative condensation of pimeloyl-[acyl-carrier protein] and L-alanine to produce 8-amino-7-oxononanoate (AON), [acyl-carrier protein], and carbon dioxide. The sequence is that of 8-amino-7-oxononanoate synthase from Burkholderia vietnamiensis (strain G4 / LMG 22486) (Burkholderia cepacia (strain R1808)).